Here is a 473-residue protein sequence, read N- to C-terminus: Myocyte-specific enhancer factor 2C (473 aa).

The MADS-box domain maps to 1–61 (MGRKKIQITR…NKLFQYASTD (61 aa)). An N6-acetyllysine modification is found at lysine 4. The segment at residues 58–86 (ASTDMDKVLLKYTEYNEPHESRTNSDIVE) is a DNA-binding region (mef2-type). Phosphoserine; by CK2 is present on serine 59. The disordered stretch occupies residues 91 to 116 (KGLNGCDSPDPDADDSVGHSPESEDK). Serine 98, serine 106, and serine 110 each carry phosphoserine. An N6-acetyllysine mark is found at lysine 116 and lysine 119. Positions 180 to 206 (NSMSPGVTHRPPSAGNTGGLMGGDLTS) are disordered. Phosphoserine is present on residues serine 222 and serine 228. N6-acetyllysine occurs at positions 234 and 239. Residue serine 240 is modified to Phosphoserine. Residues lysine 252 and lysine 264 each carry the N6-acetyllysine modification. The segment at 271–278 (SEDVDLLL) is beta domain. Phosphothreonine; by MAPK14 is present on residues threonine 293 and threonine 300. Positions 368–399 (ACTSTHLSQSSNLSLPSTQSLNIKSEPVSPPR) are transcription repressor. The segment covering 375–390 (SQSSNLSLPSTQSLNI) has biased composition (polar residues). The tract at residues 375–473 (SQSSNLSLPS…RMRLSEGWAT (99 aa)) is disordered. Residue lysine 391 forms a Glycyl lysine isopeptide (Lys-Gly) (interchain with G-Cter in SUMO) linkage. A Phosphoserine; by CDK5 modification is found at serine 396. Serine 419 is modified (phosphoserine; by MAPK7). A compositionally biased stretch (low complexity) spans 419 to 432 (SPVDSLSSCSSSYD). The span at 433–443 (GSDREDHRNEF) shows a compositional bias: basic and acidic residues. Serine 445 is subject to Phosphoserine.

The protein belongs to the MEF2 family. Forms a complex with class II HDACs in undifferentiating cells. On myogenic differentiation, HDACs are released into the cytoplasm allowing MEF2s to interact with other proteins for activation. Interacts with EP300 in differentiating cells; the interaction acetylates MEF2C leading to increased DNA binding and activation. Interacts with HDAC7 and CARM1. Interacts with HDAC4 and HDAC9; the interaction with HDACs represses transcriptional activity. Interacts with LPIN1. Interacts with MYOCD. Interacts with AKAP13. Interacts with FOXK1; the interaction inhibits MEF2C transactivation activity. Interacts (via N-terminus) with HABP4; this interaction decreases DNA-binding activity of MEF2C in myocardial cells in response to mechanical stress. Interacts with JPH2; interaction specifically takes place with the Junctophilin-2 N-terminal fragment cleavage product of JPH2. Interacts (via MADS box) with SOX18. Interacts with PHF7; the interaction promotes MEF2C binding to its transcription targets. Post-translationally, phosphorylated on Ser-59; which enhances DNA binding activity. Phosphorylated on Ser-396; which is required for Lys-391 sumoylation and inhibits transcriptional activity. In terms of processing, acetylated by p300 on several sites in diffentiating myocytes. Acetylation on Lys-4 increases DNA binding and transactivation. Sumoylated on Lys-391 with SUMO2 but not SUMO1; which represses transcriptional activity. Post-translationally, proteolytically cleaved in cerebellar granule neurons on several sites by caspase 3 and caspase 7 following neurotoxicity. Preferentially cleaves the CDK5-mediated hyperphosphorylated form which leads to neuron apoptosis and transcriptional inactivation. Expressed in the heart. Expressed in cardiac myocytes (at protein level).

It localises to the nucleus. The protein resides in the cytoplasm. Its subcellular location is the sarcoplasm. In terms of biological role, transcription activator which binds specifically to the MEF2 element present in the regulatory regions of many muscle-specific genes. Controls cardiac morphogenesis and myogenesis, and is also involved in vascular development. Enhances transcriptional activation mediated by SOX18. Plays an essential role in hippocampal-dependent learning and memory by suppressing the number of excitatory synapses and thus regulating basal and evoked synaptic transmission. Crucial for normal neuronal development, distribution, and electrical activity in the neocortex. Necessary for proper development of megakaryocytes and platelets and for bone marrow B-lymphopoiesis. Required for B-cell survival and proliferation in response to BCR stimulation, efficient IgG1 antibody responses to T-cell-dependent antigens and for normal induction of germinal center B-cells. May also be involved in neurogenesis and in the development of cortical architecture. This Rattus norvegicus (Rat) protein is Myocyte-specific enhancer factor 2C.